The sequence spans 65 residues: Large ribosomal subunit protein bL35 (65 aa).

This sequence belongs to the bacterial ribosomal protein bL35 family.

The protein is Large ribosomal subunit protein bL35 of Prochlorococcus marinus (strain MIT 9301).